Consider the following 498-residue polypeptide: Hyaluronan-mediated motility receptor (498 aa).

The interval 150–331 (EEMTSERNVF…ITDLQNQLRQ (182 aa)) is required for interaction with FAM83D. N-linked (GlcNAc...) asparagine glycans are attached at residues asparagine 262 and asparagine 302. Hyaluronic acid-binding regions lie at residues 420–430 (KQKIKHVVKLK) and 442–451 (KLRSQLAKRK). Asparagine 483 carries an N-linked (GlcNAc...) asparagine glycan. Residue threonine 488 is modified to Phosphothreonine.

As to quaternary structure, interacts with ANKRD26. Interacts with DYNLL1. Interacts with FAM83D/CHICA.

The protein resides in the cell surface. It is found in the cytoplasm. The protein localises to the cytoskeleton. It localises to the spindle. In terms of biological role, receptor for hyaluronic acid (HA). Involved in cell motility. When hyaluronan binds to HMMR, the phosphorylation of a number of proteins, including the PTK2/FAK1 occurs. May also be involved in cellular transformation and metastasis formation, and in regulating extracellular-regulated kinase (ERK) activity. May act as a regulator of adipogenisis. This is Hyaluronan-mediated motility receptor (Hmmr) from Rattus norvegicus (Rat).